The chain runs to 251 residues: Flap endonuclease Xni (251 aa).

Residue aspartate 104 coordinates Mg(2+). Residues 160 to 248 (VSPQQLSDYW…ALTGNLQQLR (89 aa)) enclose the 5'-3' exonuclease domain. Residues leucine 171, alanine 172, proline 180, valine 182, and isoleucine 185 each coordinate K(+). Residues 184-189 (GIGPKT) are interaction with DNA.

It belongs to the Xni family. It depends on Mg(2+) as a cofactor. K(+) serves as cofactor.

Has flap endonuclease activity. During DNA replication, flap endonucleases cleave the 5'-overhanging flap structure that is generated by displacement synthesis when DNA polymerase encounters the 5'-end of a downstream Okazaki fragment. The sequence is that of Flap endonuclease Xni from Serratia proteamaculans (strain 568).